The following is a 257-amino-acid chain: 3-deoxy-manno-octulosonate cytidylyltransferase (257 aa).

Belongs to the KdsB family.

It is found in the cytoplasm. It carries out the reaction 3-deoxy-alpha-D-manno-oct-2-ulosonate + CTP = CMP-3-deoxy-beta-D-manno-octulosonate + diphosphate. It participates in nucleotide-sugar biosynthesis; CMP-3-deoxy-D-manno-octulosonate biosynthesis; CMP-3-deoxy-D-manno-octulosonate from 3-deoxy-D-manno-octulosonate and CTP: step 1/1. Its pathway is bacterial outer membrane biogenesis; lipopolysaccharide biosynthesis. Activates KDO (a required 8-carbon sugar) for incorporation into bacterial lipopolysaccharide in Gram-negative bacteria. This Stenotrophomonas maltophilia (strain K279a) protein is 3-deoxy-manno-octulosonate cytidylyltransferase.